Consider the following 176-residue polypeptide: Ribosome maturation factor RimM (176 aa).

In terms of domain architecture, PRC barrel spans Pro96–Phe176.

Belongs to the RimM family. Binds ribosomal protein uS19.

The protein resides in the cytoplasm. Functionally, an accessory protein needed during the final step in the assembly of 30S ribosomal subunit, possibly for assembly of the head region. Essential for efficient processing of 16S rRNA. May be needed both before and after RbfA during the maturation of 16S rRNA. It has affinity for free ribosomal 30S subunits but not for 70S ribosomes. This chain is Ribosome maturation factor RimM, found in Shewanella woodyi (strain ATCC 51908 / MS32).